The primary structure comprises 450 residues: uncharacterized protein (450 aa).

Residues 1–58 (MAKGEIVTVKIEEMDFKGYGVGYCEGKPLKVRGGILGQRVAVRVKKGKKGRAEGEIVE) form the TRAM domain. [4Fe-4S] cluster is bound by residues Cys71, Cys77, Cys80, and Cys159. 4 residues coordinate S-adenosyl-L-methionine: Gln285, Tyr314, Glu335, and Asp380. The active-site Nucleophile is Cys407.

The protein belongs to the class I-like SAM-binding methyltransferase superfamily. RNA M5U methyltransferase family.

This is an uncharacterized protein from Caldanaerobacter subterraneus subsp. tengcongensis (strain DSM 15242 / JCM 11007 / NBRC 100824 / MB4) (Thermoanaerobacter tengcongensis).